The following is a 184-amino-acid chain: Inosine triphosphate pyrophosphatase (184 aa).

10 to 15 contributes to the ITP binding site; that stretch reads TGNANK. Position 38 (glutamate 38) interacts with Mg(2+). ITP is bound by residues lysine 50, 66-67, lysine 83, 142-145, lysine 163, and 168-169; these read DT, FGWD, and HR.

It belongs to the HAM1 NTPase family. As to quaternary structure, homodimer. It depends on Mg(2+) as a cofactor. Requires Mn(2+) as cofactor.

Its subcellular location is the cytoplasm. It is found in the nucleus. The enzyme catalyses ITP + H2O = IMP + diphosphate + H(+). It carries out the reaction dITP + H2O = dIMP + diphosphate + H(+). It catalyses the reaction XTP + H2O = XMP + diphosphate + H(+). Functionally, pyrophosphatase that hydrolyzes non-canonical purine nucleotides such as inosine triphosphate (ITP), deoxyinosine triphosphate (dITP) or xanthosine 5'-triphosphate (XTP) to their respective monophosphate derivatives. The enzyme does not distinguish between the deoxy- and ribose forms. Probably excludes non-canonical purines from RNA and DNA precursor pools, thus preventing their incorporation into RNA and DNA and avoiding chromosomal lesions. The chain is Inosine triphosphate pyrophosphatase from Fusarium vanettenii (strain ATCC MYA-4622 / CBS 123669 / FGSC 9596 / NRRL 45880 / 77-13-4) (Fusarium solani subsp. pisi).